The chain runs to 57 residues: Putative antitoxin VapB4 (57 aa).

Its function is as follows. Possibly the antitoxin component of a type II toxin-antitoxin (TA) system. Its cognate toxin is VapC4 (Potential). The protein is Putative antitoxin VapB4 (vapB4) of Methanocaldococcus jannaschii (strain ATCC 43067 / DSM 2661 / JAL-1 / JCM 10045 / NBRC 100440) (Methanococcus jannaschii).